Consider the following 510-residue polypeptide: Bifunctional purine biosynthesis protein PurH (510 aa).

An MGS-like domain is found at 1 to 142 (MRALLSVSDK…KNYKDVMVLC (142 aa)).

The protein belongs to the PurH family.

The catalysed reaction is (6R)-10-formyltetrahydrofolate + 5-amino-1-(5-phospho-beta-D-ribosyl)imidazole-4-carboxamide = 5-formamido-1-(5-phospho-D-ribosyl)imidazole-4-carboxamide + (6S)-5,6,7,8-tetrahydrofolate. The enzyme catalyses IMP + H2O = 5-formamido-1-(5-phospho-D-ribosyl)imidazole-4-carboxamide. The protein operates within purine metabolism; IMP biosynthesis via de novo pathway; 5-formamido-1-(5-phospho-D-ribosyl)imidazole-4-carboxamide from 5-amino-1-(5-phospho-D-ribosyl)imidazole-4-carboxamide (10-formyl THF route): step 1/1. It participates in purine metabolism; IMP biosynthesis via de novo pathway; IMP from 5-formamido-1-(5-phospho-D-ribosyl)imidazole-4-carboxamide: step 1/1. The sequence is that of Bifunctional purine biosynthesis protein PurH from Campylobacter jejuni (strain RM1221).